The primary structure comprises 299 residues: Protease HtpX homolog (299 aa).

Helical transmembrane passes span 19–39 and 41–61; these read LFIVTFSLILFAIGYFFVWYF and WGLTGIVLLAIFIVLYNWIAY. Position 146 (H146) interacts with Zn(2+). E147 is a catalytic residue. A Zn(2+)-binding site is contributed by H150. Helical transmembrane passes span 156 to 176 and 198 to 218; these read ILLMTVVAVVAGLIILLRDVM and IILLIIGLIFSIIAPLIVLII. E227 contacts Zn(2+).

The protein belongs to the peptidase M48B family. Zn(2+) is required as a cofactor.

The protein resides in the cell membrane. This chain is Protease HtpX homolog, found in Thermoanaerobacter pseudethanolicus (strain ATCC 33223 / 39E) (Clostridium thermohydrosulfuricum).